We begin with the raw amino-acid sequence, 254 residues long: Probable transcriptional regulatory protein HDEF_0869 (254 aa).

The disordered stretch occupies residues 1–20 (MAGHSKWANTKHRKAAQDAK).

It belongs to the TACO1 family.

The protein localises to the cytoplasm. This Hamiltonella defensa subsp. Acyrthosiphon pisum (strain 5AT) protein is Probable transcriptional regulatory protein HDEF_0869.